The chain runs to 862 residues: MMKQFLDLKAKHPDAVMLFRCGDFYETYSTDAIVASEILGITLTKRANGKGKTIEMAGFPHHALDTYLPKLIRAGKRVAICDQLEDPKLTKKLVKRGITELVTPGVSINDNVLNYKENNFLAAVHFGKASCGVAFLDISTGEFLTAEGPFDYVDKLLNNFGPKEILFERGKRLMFEGNFGSKFFTFELDDWVFTESTAREKLLKHFETKNLKGFGVEHLKNGIIASGAILQYLTMTQHTQIGHITSLARIEEDKYVRLDKFTVRSLELIGSMNDGGSSLLNVIDRTISPMGARLLKRWMVFPLKDEKPINDRLNVVEYFFRQPDFKELIEEQLHLIGDLERIISKVAVGRVSPREVVQLKVALQAIEPIKQACLEADNASLNRIGEQLNLCISIRDRIAKEINNDPPLLINKGGVIKDGVNEELDELRRISYSGKDYLLQIQQRESEQTGIPSLKVAYNNVFGYYIEVRNIHKDKVPQEWIRKQTLVNAERYITQELKVYEEKILGAEDKILVLETQLYTDLVQALTEFIPQIQINANQIARLDCLLSFANVARENNYIRPVIEDNDVLDIRQGRHPVIEKQLPIGEKYIANDVMLDSASQQIIIITGPNMAGKSALLRQTALITLLAQIGSFVPAESAHIGLVDKIFTRVGASDNISVGESTFMVEMNEAADILNNVSSRSLVLFDELGRGTSTYDGISIAWAIVEYIHEHPKAKARTLFATHYHELNEMEKSFKRIKNYNVSVKEVDNKVIFLRKLERGGSEHSFGIHVAKMAGMPKSIVKRANTILKQLESDNRQQGISGKPLTEVSENRSGMQLSFFQLDDPILCQIRDEILNLDVNNLTPIEALNKLNDIKKIVRGK.

608–615 (GPNMAGKS) lines the ATP pocket.

The protein belongs to the DNA mismatch repair MutS family.

Its function is as follows. This protein is involved in the repair of mismatches in DNA. It is possible that it carries out the mismatch recognition step. This protein has a weak ATPase activity. The protein is DNA mismatch repair protein MutS of Bacteroides thetaiotaomicron (strain ATCC 29148 / DSM 2079 / JCM 5827 / CCUG 10774 / NCTC 10582 / VPI-5482 / E50).